Consider the following 1759-residue polypeptide: Protein TIC 214 (1759 aa).

Helical transmembrane passes span 23-45 (VVVG…LFLL), 64-84 (FITG…HLAL), 129-149 (IFFQ…SSIF), 172-192 (IGWI…LICI), and 221-241 (IFVV…PPPF).

It belongs to the TIC214 family. Part of the Tic complex.

It is found in the plastid. Its subcellular location is the chloroplast inner membrane. Functionally, involved in protein precursor import into chloroplasts. May be part of an intermediate translocation complex acting as a protein-conducting channel at the inner envelope. This chain is Protein TIC 214, found in Phaseolus vulgaris (Kidney bean).